Consider the following 78-residue polypeptide: MICOS complex subunit MIC10 (78 aa).

An N-acetylserine modification is found at Ser2. Residues Ala17–Phe36 traverse the membrane as a helical segment. Topologically, residues Lys37–Gln78 are mitochondrial intermembrane.

The protein belongs to the MICOS complex subunit Mic10 family. Component of the mitochondrial contact site and cristae organizing system (MICOS) complex, composed of at least MICOS10/MIC10, CHCHD3/MIC19, CHCHD6/MIC25, APOOL/MIC27, IMMT/MIC60, APOO/MIC23/MIC26 and MICOS13/MIC13. This complex was also known under the names MINOS or MitOS complex. The MICOS complex associates with mitochondrial outer membrane proteins SAMM50, MTX1 and MTX2 (together described as components of the mitochondrial outer membrane sorting assembly machinery (SAM) complex) and DNAJC11, mitochondrial inner membrane protein TMEM11 and with HSPA9. The MICOS and SAM complexes together with DNAJC11 are part of a large protein complex spanning both membranes termed the mitochondrial intermembrane space bridging (MIB) complex. Interacts with IMMT/MIC60 and MICOS13/MIC13. Interacts with APOO/MIC23/MIC26 and APOOL/MIC27. Interacts with ARMC1.

It localises to the mitochondrion inner membrane. In terms of biological role, component of the MICOS complex, a large protein complex of the mitochondrial inner membrane that plays crucial roles in the maintenance of crista junctions, inner membrane architecture, and formation of contact sites to the outer membrane. The protein is MICOS complex subunit MIC10 of Homo sapiens (Human).